The sequence spans 511 residues: UDP-N-acetylhexosamine pyrophosphorylase-like protein 1 (511 aa).

The span at Met1 to Glu19 shows a compositional bias: basic and acidic residues. The disordered stretch occupies residues Met1–Gln22. A Substrate binding motif is present at residues Leu117 to Gly120. Residues Leu117–Gly120, Lys131, Gln205, and Gly231 contribute to the UTP site. A substrate-binding site is contributed by Asn232. Residue Asp262 coordinates UTP. The Substrate binding signature appears at Glu312 to Tyr313. Residue Lys386 coordinates UTP. Residue Lys416 coordinates substrate.

This sequence belongs to the UDPGP type 1 family.

This chain is UDP-N-acetylhexosamine pyrophosphorylase-like protein 1 (uap1l1), found in Xenopus tropicalis (Western clawed frog).